A 223-amino-acid polypeptide reads, in one-letter code: PRA1 family protein B5 (223 aa).

The next 5 membrane-spanning stretches (helical) occupy residues 83-103 (SSYF…FSLL), 105-125 (HPFS…LYLF), 146-166 (GGLI…SVLI), 170-190 (MIGI…DLFL), and 196-216 (AASG…APSA).

The protein belongs to the PRA1 family. Interacts with PRA1B1, PRA1B2, PRA1B3, PRA1B4, PRA1B6 and PRA1E. As to expression, expressed in roots, lateral roots, lateral root caps, columella cells, leaves, and shoot apex.

It localises to the endosome membrane. In terms of biological role, may be involved in both secretory and endocytic intracellular trafficking in the endosomal/prevacuolar compartments. The protein is PRA1 family protein B5 (PRA1B5) of Arabidopsis thaliana (Mouse-ear cress).